Consider the following 448-residue polypeptide: Phosphoglucosamine mutase (448 aa).

The active-site Phosphoserine intermediate is Ser-100. Residues Ser-100, Asp-240, Asp-242, and Asp-244 each coordinate Mg(2+). Ser-100 bears the Phosphoserine mark.

Belongs to the phosphohexose mutase family. Mg(2+) serves as cofactor. Activated by phosphorylation.

The catalysed reaction is alpha-D-glucosamine 1-phosphate = D-glucosamine 6-phosphate. Catalyzes the conversion of glucosamine-6-phosphate to glucosamine-1-phosphate. In Bacillus anthracis (strain A0248), this protein is Phosphoglucosamine mutase.